The primary structure comprises 486 residues: UDP-N-acetylmuramate--L-alanine ligase (486 aa).

123-129 contacts ATP; that stretch reads GTHGKTT.

Belongs to the MurCDEF family.

It is found in the cytoplasm. It carries out the reaction UDP-N-acetyl-alpha-D-muramate + L-alanine + ATP = UDP-N-acetyl-alpha-D-muramoyl-L-alanine + ADP + phosphate + H(+). It functions in the pathway cell wall biogenesis; peptidoglycan biosynthesis. In terms of biological role, cell wall formation. This is UDP-N-acetylmuramate--L-alanine ligase from Pseudomonas savastanoi pv. phaseolicola (strain 1448A / Race 6) (Pseudomonas syringae pv. phaseolicola (strain 1448A / Race 6)).